We begin with the raw amino-acid sequence, 389 residues long: ATP phosphoribosyltransferase regulatory subunit (389 aa).

Belongs to the class-II aminoacyl-tRNA synthetase family. HisZ subfamily. As to quaternary structure, heteromultimer composed of HisG and HisZ subunits.

It localises to the cytoplasm. It functions in the pathway amino-acid biosynthesis; L-histidine biosynthesis; L-histidine from 5-phospho-alpha-D-ribose 1-diphosphate: step 1/9. Required for the first step of histidine biosynthesis. May allow the feedback regulation of ATP phosphoribosyltransferase activity by histidine. The sequence is that of ATP phosphoribosyltransferase regulatory subunit from Hydrogenovibrio crunogenus (strain DSM 25203 / XCL-2) (Thiomicrospira crunogena).